The following is a 384-amino-acid chain: Involucrin (384 aa).

Residues 1-384 (MSQQHTLPVT…LPEQPQEPEV (384 aa)) form a disordered region. Basic and acidic residues-rich tracts occupy residues 56–65 (PSKHEEKGTD) and 80–134 (PELH…ELHL). Over residues 137 to 146 (QQQQESQEQE) the composition is skewed to low complexity. The segment covering 179 to 208 (KQREPQESQEQRLHLGKEQESQEQRLHLGE) has biased composition (basic and acidic residues). Low complexity predominate over residues 239 to 267 (PEQRLQLLPQGPQEQELHLGKQQQQQESQ). Composition is skewed to basic and acidic residues over residues 268–308 (QHQE…KKLL) and 315–336 (EAVKRHEQLQRDEQFGMKKEQL).

This sequence belongs to the involucrin family. As to quaternary structure, directly or indirectly cross-linked to cornifelin (CNFN). Substrate of transglutaminase. Specific glutamines or lysines are cross-linked to keratins, desmoplakin and to inter involucrin molecules. Keratinocytes of epidermis and other stratified squamous epithelia.

The protein resides in the cytoplasm. Its function is as follows. Part of the insoluble cornified cell envelope (CE) of stratified squamous epithelia. In Otolemur crassicaudatus (Brown greater galago), this protein is Involucrin (IVL).